The sequence spans 1409 residues: MEDYFSFFDKPKDPLHFSAIRISVSSPEKIRERSHGEVKKPETINYRTFKPERDGLFCAKIFGPTKDYECNCGKYKRMKHRGIICEKCGVEVIPSKVRRERLGHIDLATPVAHIWFLKSLPSRIGNLLDITLKDLEKVLYFEAFVISDPKNSPLQFCEVMSEDKFLKAQQEYGYDAFSGGMGAEAIRECLKAIDLDELSGQLRTEMMESTSEAKRKKTAKRLKVLEAFKSSGNKPEWMILECIPVLPPELRPLVPLDGGRFATSDLNDLYRRVINRNNRLKRLVELQAPEVIIRNEKRMLQEAVDALFDNGRRGRAIAGPNKRPLKSLSDMLKGKSGRFRQNLLGKRVDYSGRSVIVVGPELKLHQCGLPKKMALELFKPFIYNKLEERGYVTTIKSAKKMVEKERPEVWDVLEEVIREHPVMLNRAPTLHRLGIQAFEPVLIEGKAIQLHPLVCTAFNADFDGDQMAVHLPLSVESQVEARVLMMSTNNILSPAHGKPIIVPSQDMVLGAYYMTRDRRFERVIDETTGKEKIDAESGLPIYRKVKGTGKVFSGPDEVRIAFDAGEVDMQATVKVRMKNLVSDEKPQMIDTTVGRVILKEILPDSVPFSAVNKVMNKKELSNLVDTCYRMADNKETVILADKLKDIGFRYANLAGISICLDDMVIPEGKTEILTKAEDEVKEIQNQYTEGLITDGERYNKVIDIWAKATEDIAKEMLDNLSKEKFFVEGVGVSEEASFNAIHMMADSGARGSHQQIRQLAGMRGLMAKPSGEIIETPITANFREGLTVLQYFISTHGARKGLADTALKTANSGYLTRRLVDVAQDAIIAEEDCGTLDGLVVSSLTEGGEVIEHIGDRILGRVALDDILDPITGDVLVAANEDIDENLVKRIEDAGLEKVKIRSVLTCQSRRGICSKCYGRDLARGHSVNMGEAVGVIAAQSIGEPGTQLTMRTFHIGGTASRRAEQTSLESRTDGILKFINLNTVINAEGHHIVMNRNGEIAVVDETGREREKYLVLYGAKIKIAPGGAVTQGGILAEWDPYTMPILTEFSGKVKFGDIVEGVTMEEQLDEVTGLSRKVIIESKDSDKRPRIAIKGMGGDSADAVTGTIGRYFLPVGANITVQDDSVISAGDIIAKIPRETTKTKDITGGLPRVAELFEARKPKDFAVISEIDGRVSYGKDAKGKRKVIVTPEMGEPKEYLIPKGKHISVHEGDHVRAGEPLMDGSSNPHDILRVLGVKELAKYLVDEVQEVYRLQGVKINDKHIEVIVRQMLRRVRIKDVGDTSLLVDDQVERWVFETENQKVMNEGKRPAIAEPLLLGITKASLSTESFISAASFQETTKVLTQAAIEGKVDYLRGLKENVIMGRLIPAGTGLSSYRNIRMLTEASEPVAQAAESEDVPDVSQQEAA.

Cysteine 70, cysteine 72, cysteine 85, and cysteine 88 together coordinate Zn(2+). The Mg(2+) site is built by aspartate 461, aspartate 463, and aspartate 465. Residues cysteine 833, cysteine 907, cysteine 914, and cysteine 917 each contribute to the Zn(2+) site. The disordered stretch occupies residues glutamate 1389–alanine 1409.

It belongs to the RNA polymerase beta' chain family. In terms of assembly, the RNAP catalytic core consists of 2 alpha, 1 beta, 1 beta' and 1 omega subunit. When a sigma factor is associated with the core the holoenzyme is formed, which can initiate transcription. The cofactor is Mg(2+). Zn(2+) is required as a cofactor.

It carries out the reaction RNA(n) + a ribonucleoside 5'-triphosphate = RNA(n+1) + diphosphate. Functionally, DNA-dependent RNA polymerase catalyzes the transcription of DNA into RNA using the four ribonucleoside triphosphates as substrates. In Pelobacter propionicus (strain DSM 2379 / NBRC 103807 / OttBd1), this protein is DNA-directed RNA polymerase subunit beta'.